The primary structure comprises 251 residues: Hydroxyacylglutathione hydrolase (251 aa).

Positions 53, 55, 57, 58, 110, 127, and 165 each coordinate Zn(2+).

Belongs to the metallo-beta-lactamase superfamily. Glyoxalase II family. In terms of assembly, monomer. Requires Zn(2+) as cofactor.

It carries out the reaction an S-(2-hydroxyacyl)glutathione + H2O = a 2-hydroxy carboxylate + glutathione + H(+). The protein operates within secondary metabolite metabolism; methylglyoxal degradation; (R)-lactate from methylglyoxal: step 2/2. Thiolesterase that catalyzes the hydrolysis of S-D-lactoyl-glutathione to form glutathione and D-lactic acid. The sequence is that of Hydroxyacylglutathione hydrolase from Escherichia coli O45:K1 (strain S88 / ExPEC).